Here is a 619-residue protein sequence, read N- to C-terminus: Chaperone protein HscA homolog (619 aa).

Belongs to the heat shock protein 70 family.

In terms of biological role, chaperone involved in the maturation of iron-sulfur cluster-containing proteins. Has a low intrinsic ATPase activity which is markedly stimulated by HscB. The protein is Chaperone protein HscA homolog of Shewanella amazonensis (strain ATCC BAA-1098 / SB2B).